Consider the following 320-residue polypeptide: Heterogeneous nuclear ribonucleoprotein A1-like 3 (320 aa).

RRM domains lie at 14 to 97 (RKLF…DSQR) and 105 to 184 (KKIF…LSKQ). Disordered regions lie at residues 182–218 (SKQE…NFGR) and 271–320 (SNFG…GRRF). Residues 197–218 (SGSGNFGGGRGGGFGGNDNFGR) are compositionally biased toward gly residues. Low complexity predominate over residues 308–320 (SSSSSSYGSGRRF).

The chain is Heterogeneous nuclear ribonucleoprotein A1-like 3 from Homo sapiens (Human).